Consider the following 154-residue polypeptide: Fimbrial protein (154 aa).

A propeptide spans 1–6 (MKAQKG) (leader sequence). Phenylalanine 7 bears the N-methylphenylalanine mark. A helical transmembrane segment spans residues 7–27 (FTLIELMIVVAIIGILAAIAI). Cysteines 133 and 151 form a disulfide. An O-linked (FucNAc...) serine glycan is attached at serine 154.

Belongs to the N-Me-Phe pilin family. As to quaternary structure, the pili are polar flexible filaments of about 5.4 nanometers diameter and 2.5 micrometers average length; they consist of only a single polypeptide chain arranged in a helical configuration of five subunits per turn in the assembled pilus. Post-translationally, O-glycosylated; glycan consists of 5NbetaOHC47NFmPse(alpha2-4)Xyl(beta1-3)FucNAc in beta1-O linkage to Ser.

Its subcellular location is the fimbrium. It is found in the membrane. This chain is Fimbrial protein (pilA), found in Pseudomonas aeruginosa.